The primary structure comprises 338 residues: DNA-directed RNA polymerase subunit alpha (338 aa).

Residues 1-234 are alpha N-terminal domain (alpha-NTD); the sequence is MIHKNWAELI…DQLSIFVNFE (234 aa). The segment at 250 to 338 is alpha C-terminal domain (alpha-CTD); that stretch reads FNPLLLKKVD…DLAKRFEDQF (89 aa).

This sequence belongs to the RNA polymerase alpha chain family. As to quaternary structure, homodimer. The RNAP catalytic core consists of 2 alpha, 1 beta, 1 beta' and 1 omega subunit. When a sigma factor is associated with the core the holoenzyme is formed, which can initiate transcription.

The catalysed reaction is RNA(n) + a ribonucleoside 5'-triphosphate = RNA(n+1) + diphosphate. In terms of biological role, DNA-dependent RNA polymerase catalyzes the transcription of DNA into RNA using the four ribonucleoside triphosphates as substrates. This Cereibacter sphaeroides (strain ATCC 17029 / ATH 2.4.9) (Rhodobacter sphaeroides) protein is DNA-directed RNA polymerase subunit alpha.